The primary structure comprises 568 residues: Natural resistance-associated macrophage protein 2 (568 aa).

Positions 1–20 (MVLDPEEKIPDDGASGDHGD) are enriched in basic and acidic residues. Residues 1-45 (MVLDPEEKIPDDGASGDHGDSASLGAINPAYSNSSLPHSTGDSEE) are disordered. Topologically, residues 1–69 (MVLDPEEKIP…EEYSCFSFRK (69 aa)) are cytoplasmic. Residues 30 to 40 (AYSNSSLPHST) are compositionally biased toward polar residues. Residues 70–90 (LWAFTGPGFLMSIAYLDPGNI) form a helical membrane-spanning segment. Topologically, residues 91–95 (ESDLQ) are extracellular. Residues 96–117 (SGAVAGFKLLWVLLLATIVGLL) form a helical membrane-spanning segment. Residues 118 to 154 (LQRLAARLGVVTGLHLAEVCHRQYPKVPRIILWLMVE) lie on the Cytoplasmic side of the membrane. The chain crosses the membrane as a helical span at residues 155–175 (LAIIGSDMQEVIGSAIAINLL). The Extracellular portion of the chain corresponds to 176–179 (SAGR). Residues 180-194 (VPLYGGVLITIADTF) form a helical membrane-spanning segment. The Cytoplasmic portion of the chain corresponds to 195 to 208 (VFLFLDKYGLRKLE). Residues 209–229 (AFFGFLITIMALTFGYEYVTV) traverse the membrane as a helical segment. Over 230 to 255 (KPSQSQVLRGMFVPSCSGCHTPQVEQ) the chain is Extracellular. Residues 256–276 (AVGIVGAVIMPHNMYLHSALV) traverse the membrane as a helical segment. Residues 277–301 (KSRQVNRANKQEVREANKYFFIESC) are Cytoplasmic-facing. A helical transmembrane segment spans residues 302 to 322 (IALFVSFIINVFVVSVFAEAF). Residues 323–360 (FEKTNEQVVEVCRNSSSPHADLFPNDNSTLAVDIYKGG) are Extracellular-facing. N-linked (GlcNAc...) asparagine glycans are attached at residues N336 and N349. The chain crosses the membrane as a helical span at residues 361–381 (VVLGCYFGPAALYIWAVGILA). The Cytoplasmic portion of the chain corresponds to 382–408 (AGQSSTMTGTYSGQFVMEGFLNLKWSR). The helical transmembrane segment at 409–429 (FARVILTRSIAIIPTLLVAVF) threads the bilayer. Topologically, residues 430–440 (QDVEHLTGMND) are extracellular. Residues 441–461 (FLNVLQSLQLPFALIPILTFT) form a helical membrane-spanning segment. At 462-482 (SLRPVMSEFSNGIGWRIAGGI) the chain is on the cytoplasmic side. A helical membrane pass occupies residues 483 to 503 (LVLLVCSINMYFVVVYVQELG). The Extracellular segment spans residues 504–506 (HVA). Residues 507–527 (LYVVAAVVSVAYLGFVFYLGW) traverse the membrane as a helical segment. Topologically, residues 528 to 568 (QCLIALGLSFLDCGRSYHLGLTARPEIYLLNTVDAVSLVSR) are cytoplasmic. The required for early endosome targeting stretch occupies residues 555–559 (YLLNT). A phosphoserine mark is found at L556, S564, and S567.

The protein belongs to the NRAMP family. In terms of assembly, forms a complex with NDFIP1 and NEDD4L, in cortical neurons, in response to iron and cobalt exposure; this interaction leads to SLC11A2 ubiquitination by NEDD4L and proteasome-dependent degradation. Interacts with NDFIP1, NDFIP2 and WWP2; this interaction leads to SLC11A2 ubiquitination by WWP2 and subsequent proteasome-dependent degradation. Interacts with COX2 and TOM6 at the outer mitochondrion membrane. Interacts with ARRDC1; this interaction regulates the incorporation of SLC11A2 into extracellular vesicles through an ubiquitination-dependent mechanism. Interacts with ARRDC4; controls the incorporation of SLC11A2 into extracellular vesicles through an ubiquitination-dependent mechanism. Post-translationally, ubiquitinated by WWP2. N-glycosylated. Ubiquitous. As to expression, expressed in proximal intestine, kidney and brain.

It is found in the golgi apparatus. It localises to the trans-Golgi network membrane. Its subcellular location is the early endosome membrane. The protein localises to the recycling endosome membrane. The protein resides in the late endosome membrane. It is found in the lysosome membrane. It localises to the apical cell membrane. Its subcellular location is the mitochondrion outer membrane. The protein localises to the extracellular vesicle membrane. It carries out the reaction Fe(2+)(in) + H(+)(in) = Fe(2+)(out) + H(+)(out). It catalyses the reaction Cd(2+)(out) + H(+)(out) = Cd(2+)(in) + H(+)(in). The enzyme catalyses Co(2+)(out) + H(+)(out) = Co(2+)(in) + H(+)(in). The catalysed reaction is Mn(2+)(in) + H(+)(in) = Mn(2+)(out) + H(+)(out). It carries out the reaction Zn(2+)(out) + H(+)(out) = Zn(2+)(in) + H(+)(in). It catalyses the reaction Ni(2+)(out) + H(+)(out) = Ni(2+)(in) + H(+)(in). The enzyme catalyses H(+)(in) = H(+)(out). The catalysed reaction is Fe(2+)(in) = Fe(2+)(out). Its activity is regulated as follows. Inhibited by 2-(3-carbamimidoylsulfanylmethyl-benzyl)-isothiourea. Functionally, proton-coupled metal ion symporter operating with a proton to metal ion stoichiometry of 1:1. Selectively transports various divalent metal cations, in decreasing affinity: Cd(2+) &gt; Fe(2+) &gt; Co(2+), Mn(2+) &gt;&gt; Zn(2+), Ni(2+), VO(2+). Essential for maintenance of iron homeostasis by modulating intestinal absorption of dietary Fe(2+) and TF-associated endosomal Fe(2+) transport in erythroid precursors and other cells. Enables Fe(2+) and Mn(2+) ion entry into mitochondria, and is thus expected to promote mitochondrial heme synthesis, iron-sulfur cluster biogenesis and antioxidant defense. Can mediate uncoupled fluxes of either protons or metal ions. This chain is Natural resistance-associated macrophage protein 2 (Slc11a2), found in Rattus norvegicus (Rat).